We begin with the raw amino-acid sequence, 158 residues long: Probable deoxyuridine 5'-triphosphate nucleotidohydrolase (158 aa).

It belongs to the dUTPase family. Mg(2+) is required as a cofactor.

The enzyme catalyses dUTP + H2O = dUMP + diphosphate + H(+). Its pathway is pyrimidine metabolism; dUMP biosynthesis; dUMP from dCTP (dUTP route): step 1/2. This enzyme is involved in nucleotide metabolism: it produces dUMP, the immediate precursor of thymidine nucleotides and it decreases the intracellular concentration of dUTP so that uracil cannot be incorporated into DNA. It does probably not deaminate dCTP. This chain is Probable deoxyuridine 5'-triphosphate nucleotidohydrolase, found in Sulfolobus islandicus rod-shaped virus 1 (SIRV-1).